The primary structure comprises 270 residues: Glutamate racemase (270 aa).

Substrate-binding positions include 10 to 11 and 42 to 43; these read DS and YG. The Proton donor/acceptor role is filled by Cys-74. Residue 75–76 coordinates substrate; the sequence is NT. Cys-189 serves as the catalytic Proton donor/acceptor. 190–191 provides a ligand contact to substrate; sequence TH.

The protein belongs to the aspartate/glutamate racemases family.

The enzyme catalyses L-glutamate = D-glutamate. It functions in the pathway cell wall biogenesis; peptidoglycan biosynthesis. In terms of biological role, provides the (R)-glutamate required for cell wall biosynthesis. The chain is Glutamate racemase from Bartonella quintana (strain Toulouse) (Rochalimaea quintana).